A 334-amino-acid polypeptide reads, in one-letter code: Glycerol-1-phosphate dehydrogenase [NAD(P)+] (334 aa).

NAD(+)-binding positions include 77–81 (GRPID) and 99–102 (TTAS). Aspartate 104 serves as a coordination point for substrate. Residue serine 108 coordinates NAD(+). Aspartate 147 is a binding site for substrate. Zn(2+)-binding residues include aspartate 147 and histidine 225. Histidine 229 is a binding site for substrate. Zn(2+) is bound at residue histidine 246.

This sequence belongs to the glycerol-1-phosphate dehydrogenase family. Requires Zn(2+) as cofactor.

Its subcellular location is the cytoplasm. The catalysed reaction is sn-glycerol 1-phosphate + NAD(+) = dihydroxyacetone phosphate + NADH + H(+). It catalyses the reaction sn-glycerol 1-phosphate + NADP(+) = dihydroxyacetone phosphate + NADPH + H(+). The protein operates within membrane lipid metabolism; glycerophospholipid metabolism. In terms of biological role, catalyzes the NAD(P)H-dependent reduction of dihydroxyacetonephosphate (DHAP or glycerone phosphate) to glycerol 1-phosphate (G1P). The G1P thus generated is used as the glycerophosphate backbone of phospholipids in the cellular membranes of Archaea. The polypeptide is Glycerol-1-phosphate dehydrogenase [NAD(P)+] (Methanococcus maripaludis (strain C5 / ATCC BAA-1333)).